Consider the following 371-residue polypeptide: 4-hydroxy-3-methylbut-2-en-1-yl diphosphate synthase (flavodoxin) (371 aa).

Residues Cys270, Cys273, Cys305, and Glu312 each contribute to the [4Fe-4S] cluster site.

Belongs to the IspG family. It depends on [4Fe-4S] cluster as a cofactor.

It catalyses the reaction (2E)-4-hydroxy-3-methylbut-2-enyl diphosphate + oxidized [flavodoxin] + H2O + 2 H(+) = 2-C-methyl-D-erythritol 2,4-cyclic diphosphate + reduced [flavodoxin]. The protein operates within isoprenoid biosynthesis; isopentenyl diphosphate biosynthesis via DXP pathway; isopentenyl diphosphate from 1-deoxy-D-xylulose 5-phosphate: step 5/6. Functionally, converts 2C-methyl-D-erythritol 2,4-cyclodiphosphate (ME-2,4cPP) into 1-hydroxy-2-methyl-2-(E)-butenyl 4-diphosphate. The chain is 4-hydroxy-3-methylbut-2-en-1-yl diphosphate synthase (flavodoxin) from Shewanella sp. (strain W3-18-1).